We begin with the raw amino-acid sequence, 287 residues long: Pantothenate synthetase (287 aa).

Methionine 30–histidine 37 lines the ATP pocket. The active-site Proton donor is the histidine 37. Glutamine 61 contributes to the (R)-pantoate binding site. Glutamine 61 is a beta-alanine binding site. Residue glycine 152 to aspartate 155 coordinates ATP. Residue glutamine 158 coordinates (R)-pantoate. Residues isoleucine 181 and glutamate 189 to arginine 192 contribute to the ATP site.

It belongs to the pantothenate synthetase family. Homodimer.

It localises to the cytoplasm. The catalysed reaction is (R)-pantoate + beta-alanine + ATP = (R)-pantothenate + AMP + diphosphate + H(+). It participates in cofactor biosynthesis; (R)-pantothenate biosynthesis; (R)-pantothenate from (R)-pantoate and beta-alanine: step 1/1. Catalyzes the condensation of pantoate with beta-alanine in an ATP-dependent reaction via a pantoyl-adenylate intermediate. The chain is Pantothenate synthetase from Corynebacterium efficiens (strain DSM 44549 / YS-314 / AJ 12310 / JCM 11189 / NBRC 100395).